The sequence spans 349 residues: tRNA N6-adenosine threonylcarbamoyltransferase (349 aa).

H115 and H119 together coordinate Fe cation. Residues 137–141, D170, G183, and N281 each bind substrate; that span reads LASGG. D309 contributes to the Fe cation binding site.

It belongs to the KAE1 / TsaD family. The cofactor is Fe(2+).

Its subcellular location is the cytoplasm. It catalyses the reaction L-threonylcarbamoyladenylate + adenosine(37) in tRNA = N(6)-L-threonylcarbamoyladenosine(37) in tRNA + AMP + H(+). Required for the formation of a threonylcarbamoyl group on adenosine at position 37 (t(6)A37) in tRNAs that read codons beginning with adenine. Is involved in the transfer of the threonylcarbamoyl moiety of threonylcarbamoyl-AMP (TC-AMP) to the N6 group of A37, together with TsaE and TsaB. TsaD likely plays a direct catalytic role in this reaction. The chain is tRNA N6-adenosine threonylcarbamoyltransferase from Methylobacterium nodulans (strain LMG 21967 / CNCM I-2342 / ORS 2060).